We begin with the raw amino-acid sequence, 193 residues long: Putative F-box protein At1g31072 (193 aa).

The F-box domain occupies 4–53 (EKTLDSIPIDVFLDIFSRLPAKSVGRSCCVSNRWASILGSQDFKELFLTM).

The chain is Putative F-box protein At1g31072 from Arabidopsis thaliana (Mouse-ear cress).